Reading from the N-terminus, the 217-residue chain is Insulin-like growth factor 2.S (217 aa).

The N-terminal stretch at Met1–Ala56 is a signal peptide. The segment at Tyr57–Phe83 is b. 3 disulfides stabilise this stretch: Cys64–Cys103, Cys76–Cys116, and Cys102–Cys107. Residues Ser84–Arg96 are c. The a stretch occupies residues Gly97–Ala117. The interval Lys118–Glu123 is d. Positions Arg124 to Asn217 are cleaved as a propeptide — e peptide.

Belongs to the insulin family.

Its subcellular location is the secreted. Its function is as follows. The insulin-like growth factors, isolated from plasma, are structurally and functionally related to insulin but have a much higher growth-promoting activity. Promotes anterior neural development. Acts as a ligand for integrin which is required for IGF2 signaling. The chain is Insulin-like growth factor 2.S from Xenopus laevis (African clawed frog).